The following is a 222-amino-acid chain: Cytidylate kinase (222 aa).

Residue 10–18 (GTSSSGKSV) coordinates ATP.

This sequence belongs to the cytidylate kinase family. Type 1 subfamily.

The protein resides in the cytoplasm. It catalyses the reaction CMP + ATP = CDP + ADP. It carries out the reaction dCMP + ATP = dCDP + ADP. This Mycoplasma capricolum subsp. capricolum (strain California kid / ATCC 27343 / NCTC 10154) protein is Cytidylate kinase.